The sequence spans 333 residues: Replication factor C subunit 2 (333 aa).

Ala-2 bears the N-acetylalanine mark. 55-62 provides a ligand contact to ATP; that stretch reads GPPGTGKT.

It belongs to the activator 1 small subunits family. As to quaternary structure, heterotetramer of subunits RFC2, RFC3, RFC4 and RFC5 that can form a complex with RFC1.

It is found in the nucleus. In terms of biological role, may be involved in DNA replication and thus regulate cell proliferation. The protein is Replication factor C subunit 2 (RFC2) of Arabidopsis thaliana (Mouse-ear cress).